Consider the following 339-residue polypeptide: tRNA-specific 2-thiouridylase MnmA (339 aa).

ATP is bound by residues 6–13 (AMSGGVDS) and methionine 32. Residue cysteine 92 is the Nucleophile of the active site. Cysteine 92 and cysteine 186 form a disulfide bridge. Position 116 (glycine 116) interacts with ATP. An interaction with tRNA region spans residues 134–136 (KDQ). Cysteine 186 (cysteine persulfide intermediate) is an active-site residue. Residues 288–289 (RY) are interaction with tRNA.

The protein belongs to the MnmA/TRMU family.

The protein resides in the cytoplasm. It catalyses the reaction S-sulfanyl-L-cysteinyl-[protein] + uridine(34) in tRNA + AH2 + ATP = 2-thiouridine(34) in tRNA + L-cysteinyl-[protein] + A + AMP + diphosphate + H(+). In terms of biological role, catalyzes the 2-thiolation of uridine at the wobble position (U34) of tRNA, leading to the formation of s(2)U34. The chain is tRNA-specific 2-thiouridylase MnmA from Campylobacter curvus (strain 525.92).